The sequence spans 567 residues: Probable transport protein (567 aa).

The segment covering 1–30 has biased composition (basic and acidic residues); that stretch reads MSDRVEVNERRSDSVSEKEPARDDARKDVT. Residues 1–38 form a disordered region; the sequence is MSDRVEVNERRSDSVSEKEPARDDARKDVTDDQEDAPP. Residues 1 to 46 lie on the Cytoplasmic side of the membrane; sequence MSDRVEVNERRSDSVSEKEPARDDARKDVTDDQEDAPPFMTANNAR. Residues 47–67 form a helical membrane-spanning segment; it reads VMLVQAIGGSLNGYSIGFVGV. The Extracellular portion of the chain corresponds to 68 to 160; the sequence is YSTLFGYSTN…PSGYSSSESG (93 aa). A helical transmembrane segment spans residues 161-181; sequence IFAGSMIAGCLIGSVFAGPLA. Over 182–189 the chain is Cytoplasmic; the sequence is SKIGARLS. A helical membrane pass occupies residues 190–210; sequence FLLVGLVGVVASVMYHASCAA. The Extracellular segment spans residues 211–212; that stretch reads DE. A helical transmembrane segment spans residues 213–233; that stretch reads FWVLIVGRFVIGLFLGVICVA. Residues 234–249 are Cytoplasmic-facing; the sequence is CPVYTDQNAHPKWKRT. Residues 250–270 traverse the membrane as a helical segment; sequence IGVMFQVFTTLGIFVAALMGL. Topologically, residues 271-289 are extracellular; it reads ALGQSIRFDHDGDQKVMAR. A helical membrane pass occupies residues 290 to 310; the sequence is MQGLCVFSTLFSLLTVVLGIV. The Cytoplasmic segment spans residues 311–341; sequence TRESRAKFDGGEEGRAELNPSEYGYVEMIPR. The chain crosses the membrane as a helical span at residues 342–362; it reads LLMGCVMAGTLQLTGINAVMN. Residues 363 to 366 are Extracellular-facing; it reads YAPT. The helical transmembrane segment at 367 to 387 threads the bilayer; it reads IMGSLGLAPLVGNFVVMLWNF. Over 388–404 the chain is Cytoplasmic; the sequence is VTTLASIPLSYVFTMRH. A helical membrane pass occupies residues 405-425; the sequence is VFLFGSIFTSCMCLFMCGIPV. Over 426–437 the chain is Extracellular; the sequence is YPGVSKKLEAKN. A helical membrane pass occupies residues 438 to 458; it reads GVAITGILLFILGFEVCVGPC. Over 459-480 the chain is Cytoplasmic; the sequence is YYVLTQDMFPPSFRPRGASFTQ. The chain crosses the membrane as a helical span at residues 481 to 501; it reads VAQFIFNLIINVCYPIATESI. Over 502 to 514 the chain is Extracellular; the sequence is SGGPSGNQDKGQA. The chain crosses the membrane as a helical span at residues 515–535; the sequence is VAFIFFGGLGLICFVIQVFFL. The Cytoplasmic segment spans residues 536 to 567; the sequence is HPWDEERDGKKVVAPAIGKKELSEESIGNRAE.

Belongs to the major facilitator superfamily. Sugar transporter (TC 2.A.1.1) family.

Its subcellular location is the membrane. Its function is as follows. Probable membrane transport protein. This chain is Probable transport protein (PRO-1), found in Leishmania enriettii.